We begin with the raw amino-acid sequence, 161 residues long: Large ribosomal subunit protein uL10 (161 aa).

It belongs to the universal ribosomal protein uL10 family. Part of the ribosomal stalk of the 50S ribosomal subunit. The N-terminus interacts with L11 and the large rRNA to form the base of the stalk. The C-terminus forms an elongated spine to which L12 dimers bind in a sequential fashion forming a multimeric L10(L12)X complex.

Functionally, forms part of the ribosomal stalk, playing a central role in the interaction of the ribosome with GTP-bound translation factors. The protein is Large ribosomal subunit protein uL10 of Malacoplasma penetrans (strain HF-2) (Mycoplasma penetrans).